The primary structure comprises 196 residues: Cell division protein SepF (196 aa).

A disordered region spans residues 15-80 (VEDDEEFNEP…PKRSASTFSK (66 aa)). Residues 56–79 (RPAQSTPKPQAQTAAPKRSASTFS) show a composition bias toward polar residues.

This sequence belongs to the SepF family. As to quaternary structure, homodimer. Interacts with FtsZ.

The protein resides in the cytoplasm. In terms of biological role, cell division protein that is part of the divisome complex and is recruited early to the Z-ring. Probably stimulates Z-ring formation, perhaps through the cross-linking of FtsZ protofilaments. Its function overlaps with FtsA. The sequence is that of Cell division protein SepF from Lactococcus lactis subsp. cremoris (strain SK11).